We begin with the raw amino-acid sequence, 556 residues long: Hydroxylamine reductase (556 aa).

[4Fe-4S] cluster is bound by residues Cys-4, Cys-7, Cys-19, and Cys-26. His-252, Glu-276, Cys-320, Cys-407, Cys-435, Cys-460, Glu-494, and Lys-496 together coordinate hybrid [4Fe-2O-2S] cluster. Residue Cys-407 is modified to Cysteine persulfide.

The protein belongs to the HCP family. The cofactor is [4Fe-4S] cluster. Requires hybrid [4Fe-2O-2S] cluster as cofactor.

It localises to the cytoplasm. The enzyme catalyses A + NH4(+) + H2O = hydroxylamine + AH2 + H(+). Catalyzes the reduction of hydroxylamine to form NH(3) and H(2)O. The polypeptide is Hydroxylamine reductase (Acidithiobacillus ferridurans).